A 476-amino-acid polypeptide reads, in one-letter code: Probable cytosol aminopeptidase (476 aa).

The Mn(2+) site is built by lysine 242 and aspartate 247. The active site involves lysine 254. Aspartate 265, aspartate 324, and glutamate 326 together coordinate Mn(2+). Residue arginine 328 is part of the active site.

The protein belongs to the peptidase M17 family. Mn(2+) is required as a cofactor.

The protein localises to the cytoplasm. It catalyses the reaction Release of an N-terminal amino acid, Xaa-|-Yaa-, in which Xaa is preferably Leu, but may be other amino acids including Pro although not Arg or Lys, and Yaa may be Pro. Amino acid amides and methyl esters are also readily hydrolyzed, but rates on arylamides are exceedingly low.. The enzyme catalyses Release of an N-terminal amino acid, preferentially leucine, but not glutamic or aspartic acids.. Functionally, presumably involved in the processing and regular turnover of intracellular proteins. Catalyzes the removal of unsubstituted N-terminal amino acids from various peptides. This is Probable cytosol aminopeptidase from Treponema denticola (strain ATCC 35405 / DSM 14222 / CIP 103919 / JCM 8153 / KCTC 15104).